Consider the following 105-residue polypeptide: MSTKNKKAAGGNGGAPKQTRQQSHDSQDYSSFKTVLFYCMLIVFLPVLTFFVLKGFVLDQFLNISEVKVNIASAVGAVVALHIALGLYIYRAYFGAPGSKGSKTD.

The tract at residues 1–26 (MSTKNKKAAGGNGGAPKQTRQQSHDS) is disordered. Topologically, residues 1 to 36 (MSTKNKKAAGGNGGAPKQTRQQSHDSQDYSSFKTVL) are cytoplasmic. Residues 37 to 57 (FYCMLIVFLPVLTFFVLKGFV) traverse the membrane as a helical segment. The Lumenal portion of the chain corresponds to 58 to 68 (LDQFLNISEVK). The chain crosses the membrane as a helical span at residues 69–89 (VNIASAVGAVVALHIALGLYI). Residues 90 to 105 (YRAYFGAPGSKGSKTD) lie on the Cytoplasmic side of the membrane.

The protein belongs to the VMA21 family.

Its subcellular location is the endoplasmic reticulum membrane. The protein resides in the endoplasmic reticulum-Golgi intermediate compartment membrane. It is found in the cytoplasmic vesicle. It localises to the COPII-coated vesicle membrane. Its function is as follows. Required for the assembly of the V0 complex of the vacuolar ATPase (V-ATPase) in the endoplasmic reticulum. This chain is Vacuolar ATPase assembly integral membrane protein VMA21 homolog, found in Drosophila sechellia (Fruit fly).